Consider the following 845-residue polypeptide: Putative DEAD-box ATP-dependent RNA helicase 29 (845 aa).

The short motif at 28-56 (GGFESLNLGPNVFNAIKKKGYKVPTPIQR) is the Q motif element. In terms of domain architecture, Helicase ATP-binding spans 59 to 232 (MPLILSGVDV…KAGLREPQLV (174 aa)). 72-79 (ARTGSGKT) lines the ATP pocket. The DEAD box signature appears at 180 to 183 (DEAD). One can recognise a Helicase C-terminal domain in the interval 256 to 411 (KYSALLYLVR…EVLKNMEEVM (156 aa)). The interval 675–845 (SGKIKTESGA…GGGGKRGRGR (171 aa)) is disordered. 2 stretches are compositionally biased toward basic and acidic residues: residues 696–716 (RWQERSHKKVSRDSGDADETT) and 738–754 (VRSEIKDLDQVRKERQQ). Residues 770–799 (GGRGGARGGRGGGARGGRGGSRDFGGGGRD) show a composition bias toward gly residues. The span at 806 to 817 (RGGRSGGRDFGG) shows a compositional bias: basic and acidic residues. Over residues 828–845 (GGKRGGGRGGGGKRGRGR) the composition is skewed to basic residues.

The protein belongs to the DEAD box helicase family. DDX54/DBP10 subfamily.

The catalysed reaction is ATP + H2O = ADP + phosphate + H(+). This chain is Putative DEAD-box ATP-dependent RNA helicase 29 (RH29), found in Arabidopsis thaliana (Mouse-ear cress).